We begin with the raw amino-acid sequence, 446 residues long: MAPVIPAASAPHKPRKFYQHLYVQVLAAIAIGILLGHFYPDLGTQMKPLGDAFIKLVKMVIAPVIFLTVVTGIAGMRDLAKVGRVAGKAMIYFLTFSTLALIIGLIIANVVQPGAGMHIAPASLDPKAVASYAAKAHDASIIGFLMNIIPDTPISALGSGDILQVLFFSVLFGIALAGVGDRGEPVMNVLVSASQAMFRLVHILMKAAPIGAFGAMAFTIGRYGIGSVANLAFLILTFYITSFLFVVVVLGLVARYNGFSIFALLRYIKEELLLVLGTSSSEAALPSLIEKMERAGCRKSVVGLVIPTGYSFNLDGTNIYMTLAALFIAQATDIHLSLGDQILLLLVAMLSSKGAAGITGAGFITLAATLSVVPTVPLAGMALILGIDRFMSECRAITNFIGNAVATIVVARWEGELDKDKLAAALSGRISVEDDDLPIEATSPAQ.

9 helical membrane-spanning segments follow: residues His20–Pro40, Leu56–Met76, Ile91–Val111, Gly160–Gly180, Leu200–Ile220, Phe233–Val253, Ile319–Gly339, Leu344–Ile364, and Ala367–Ile387.

Belongs to the dicarboxylate/amino acid:cation symporter (DAACS) (TC 2.A.23) family.

It localises to the cell inner membrane. Functionally, responsible for the transport of dicarboxylates such as succinate, fumarate, and malate from the periplasm across the membrane. The protein is C4-dicarboxylate transport protein of Azorhizobium caulinodans (strain ATCC 43989 / DSM 5975 / JCM 20966 / LMG 6465 / NBRC 14845 / NCIMB 13405 / ORS 571).